The primary structure comprises 145 residues: Hemoglobin subunit beta (145 aa).

One can recognise a Globin domain in the interval 1 to 145 (MLTAEEKAAV…VANALAHRYH (145 aa)). T11 carries the phosphothreonine modification. K58 bears the N6-acetyllysine mark. H62 provides a ligand contact to heme b. K81 bears the N6-acetyllysine mark. H91 provides a ligand contact to heme b. At C92 the chain carries S-nitrosocysteine.

It belongs to the globin family. Heterotetramer of two alpha chains and two beta chains. As to expression, red blood cells.

Functionally, involved in oxygen transport from the lung to the various peripheral tissues. This Alces alces alces (European moose) protein is Hemoglobin subunit beta (HBB).